Here is a 309-residue protein sequence, read N- to C-terminus: MDFSTPVLKHVEKHIQHRIHFMNTTVYQSSRYKGGAYTTSHLIFNPKIGKFEILVNASVSFGNELNKTFEELGFNSLPSADDLEKDTKDVNETGRKYLLEAYAGLKVKRAGVYAGILDTTSFFDTNEYANDEQNQFLNTDLVNNPLAVLPSYNPGLILNLNLSHNFSLQFGWAQGDPDTESVYLMQFGFSSEDYHVYFYYTHSPFEEVKSLGISSDYTFENLGFFFRFGKNNLEDYKYFVSGGSVLNLGKEEIGFGYAFRKGNKLKDVNVLEIYFKHVLSSYLHITFDYQLIDDVRNTYVLGFRLNFEY.

It belongs to the OprB family.

This is an uncharacterized protein from Aquifex aeolicus (strain VF5).